Here is a 592-residue protein sequence, read N- to C-terminus: Threonine dehydratase biosynthetic, chloroplastic (592 aa).

The transit peptide at M1–E91 directs the protein to the chloroplast. N6-(pyridoxal phosphate)lysine is present on K141. 2 ACT-like domains span residues A419–T490 and V512–D583.

Belongs to the serine/threonine dehydratase family. Pyridoxal 5'-phosphate is required as a cofactor.

Its subcellular location is the plastid. It is found in the chloroplast. It catalyses the reaction L-threonine = 2-oxobutanoate + NH4(+). It participates in amino-acid biosynthesis; L-isoleucine biosynthesis; 2-oxobutanoate from L-threonine: step 1/1. Allosterically inhibited by isoleucine. Strain GM11b is isoleucine feedback insensitive and is resistant to the antimetabolite L-O-methylthreonine. Its function is as follows. Catalyzes the formation of alpha-ketobutyrate from threonine in a two-step reaction. The first step is a dehydration of threonine, followed by rehydration and liberation of ammonia. The chain is Threonine dehydratase biosynthetic, chloroplastic (OMR1) from Arabidopsis thaliana (Mouse-ear cress).